A 299-amino-acid chain; its full sequence is Circadian clock oscillator protein KaiA (299 aa).

Residues 1 to 135 (MQSPLSLCLF…LHLGPICTLP (135 aa)) are psR domain, binds oxidized quinones. Residues 1–169 (MQSPLSLCLF…RLADKLKERL (169 aa)) form the KaiA N-terminal domain. The tract at residues 170–178 (GYLGVYYKR) is flexible linker. Residues 179-287 (KPSHFYRNFS…GEMYRRSIPR (109 aa)) enclose the KaiA C-terminal domain.

The protein belongs to the KaiA family. In terms of assembly, homodimer. The KaiABC1 complex composition changes during the circadian cycle to control KaiC1 phosphorylation. Complexes KaiC1(6), KaiA(2-4):KaiC1(6), KaiB(6):KaiC1(6) and KaiC1(6):KaiB(6):KaiA(12) are among the most important forms, many form cooperatively. KaiA and CikA bind to the same region of the KaiB(fs) form and therefore compete. Interacts with KaiC1 but not KaiC2 or KaiC3. Interacts with itself, not seen to interact with other Kai proteins.

Its function is as follows. Key component of the KaiABC oscillator complex, which constitutes the main circadian regulator in cyanobacteria. Complex composition changes during the circadian cycle to control KaiC phosphorylation. KaiA stimulates KaiC autophosphorylation, while KaiB sequesters KaiA, leading to KaiC autodephosphorylation. KaiA binding to the KaiC CII domain during the subjective day yields KaiA(2-4):KaiC(6) complexes which stimulate KaiC autophosphorylation. Phospho-Ser-431 KaiC accumulation triggers binding of KaiB during the subjective night to form the KaiB(6):KaiC(6) complex, leading to changes in the output regulators CikA and SasA. KaiB(6):KaiC(6) formation exposes a site for KaiA binding on KaiB that sequesters KaiA from KaiC's CII domain, making the KaiC(6):KaiB(6):KaiA(12) complex resulting in KaiC autodephosphorylation. Complete dephosphorylation of KaiC leads to dissociation of KaiA(2):KaiB(1), completing 1 cycle of the Kai oscillator. Functionally, component of the oscillator and circadian clock in this organism, enhances fitness in a rhythmic environment. Stimulates KaiC1 to autophosphorylate, has no effect on the kinase activity of KaiC2 or KaiC3. Binds oxidized quinones via the N-terminal PsR domain, allowing it to sense redox changes and possibly mediate clock input. This chain is Circadian clock oscillator protein KaiA, found in Synechocystis sp. (strain ATCC 27184 / PCC 6803 / Kazusa).